Consider the following 701-residue polypeptide: Elongation factor G (701 aa).

In terms of domain architecture, tr-type G spans serine 8–threonine 290. Residues alanine 17–threonine 24, aspartate 88–histidine 92, and asparagine 142–aspartate 145 contribute to the GTP site.

It belongs to the TRAFAC class translation factor GTPase superfamily. Classic translation factor GTPase family. EF-G/EF-2 subfamily.

Its subcellular location is the cytoplasm. Its function is as follows. Catalyzes the GTP-dependent ribosomal translocation step during translation elongation. During this step, the ribosome changes from the pre-translocational (PRE) to the post-translocational (POST) state as the newly formed A-site-bound peptidyl-tRNA and P-site-bound deacylated tRNA move to the P and E sites, respectively. Catalyzes the coordinated movement of the two tRNA molecules, the mRNA and conformational changes in the ribosome. This Haemophilus ducreyi (strain 35000HP / ATCC 700724) protein is Elongation factor G.